We begin with the raw amino-acid sequence, 1390 residues long: DNA-directed RNA polymerase III subunit RPC1 (1390 aa).

Zn(2+) is bound by residues Cys-69, Cys-72, Cys-79, His-82, Cys-109, and Cys-112. Lys-144 contacts DNA. 2 residues coordinate Zn(2+): Cys-156 and Cys-159. The DNA site is built by Lys-167, Ser-326, Lys-348, Arg-353, Arg-360, and Arg-366. Residue Lys-445 is modified to N6-acetyllysine. Residue Arg-464 coordinates RNA. Positions 499, 501, and 503 each coordinate Mg(2+). Asp-503 is an RNA binding site. The tract at residues 844–856 is bridging helix; that stretch reads PTEFFFHTMAGRE. DNA contacts are provided by Arg-1159, Arg-1305, and Lys-1323.

It belongs to the RNA polymerase beta' chain family. As to quaternary structure, component of the RNA polymerase III (Pol III) complex consisting of 17 subunits: a ten-subunit catalytic core composed of POLR3A/RPC1, POLR3B/RPC2, POLR1C/RPAC1, POLR1D/RPAC2, POLR3K/RPC10, POLR2E/RPABC1, POLR2F/RPABC2, POLR2H/RPABC3, POLR2K/RPABC4 and POLR2L/RPABC5; a mobile stalk composed of two subunits POLR3H/RPC8 and CRCP/RPC9, protruding from the core and functioning primarily in transcription initiation; and additional subunits homologous to general transcription factors of the RNA polymerase II machinery, POLR3C/RPC3-POLR3F/RPC6-POLR3G/RPC7 heterotrimer required for transcription initiation and POLR3D/RPC4-POLR3E/RPC5 heterodimer involved in both transcription initiation and termination. As part of the RNA polymerase III complex, interacts with PKP2. It depends on Mg(2+) as a cofactor.

The protein localises to the nucleus. It is found in the cytoplasm. It localises to the cytosol. It catalyses the reaction RNA(n) + a ribonucleoside 5'-triphosphate = RNA(n+1) + diphosphate. In terms of biological role, catalytic core component of RNA polymerase III (Pol III), a DNA-dependent RNA polymerase which synthesizes small non-coding RNAs using the four ribonucleoside triphosphates as substrates. Synthesizes 5S rRNA, snRNAs, tRNAs and miRNAs from at least 500 distinct genomic loci. Pol III-mediated transcription cycle proceeds through transcription initiation, transcription elongation and transcription termination stages. During transcription initiation, Pol III is recruited to DNA promoters type I, II or III with the help of general transcription factors and other specific initiation factors. Once the polymerase has escaped from the promoter it enters the elongation phase during which RNA is actively polymerized, based on complementarity with the template DNA strand. Transcription termination involves the release of the RNA transcript and polymerase from the DNA. Forms Pol III active center together with the second largest subunit POLR3B/RPC2. Appends one nucleotide at a time to the 3' end of the nascent RNA, with POLR3A/RPC1 contributing a Mg(2+)-coordinating DxDGD motif, and POLR3B/RPC2 participating in the coordination of a second Mg(2+) ion and providing lysine residues believed to facilitate Watson-Crick base pairing between the incoming nucleotide and template base. Typically, Mg(2+) ions direct a 5' nucleoside triphosphate to form a phosphodiester bond with the 3' hydroxyl of the preceding nucleotide of the nascent RNA, with the elimination of pyrophosphate. Pol III plays a key role in sensing and limiting infection by intracellular bacteria and DNA viruses. Acts as a nuclear and cytosolic DNA sensor involved in innate immune response. Can sense non-self dsDNA that serves as template for transcription into dsRNA. The non-self RNA polymerase III transcripts, such as Epstein-Barr virus-encoded RNAs (EBERs) induce type I interferon and NF-kappa-B through the RIG-I pathway. The polypeptide is DNA-directed RNA polymerase III subunit RPC1 (Bos taurus (Bovine)).